Consider the following 2318-residue polypeptide: Neurogenic locus notch homolog protein 3 (2318 aa).

Over residues 1–14 (MGLGARGRRRRRRL) the composition is skewed to basic residues. Residues 1-20 (MGLGARGRRRRRRLMALPPP) are disordered. Positions 1–39 (MGLGARGRRRRRRLMALPPPPPPMRALPLLLLLAGLGAA) are cleaved as a signal peptide. 3 consecutive EGF-like domains span residues 40–78 (APPC…ERCQ), 79–119 (LEDP…PDCS), and 120–157 (QPDP…QSCQ). Over 40–1643 (APPCLDGSPC…PLEAPEQSVP (1604 aa)) the chain is Extracellular. 99 disulfide bridges follow: C43–C55, C49–C66, C68–C77, C83–C94, C88–C107, C109–C118, C124–C135, C129–C145, C147–C156, C163–C175, C169–C184, C186–C195, C202–C213, C207–C223, C225–C234, C241–C252, C246–C261, C263–C272, C279–C292, C286–C301, C303–C312, C319–C330, C324–C339, C341–C350, C356–C367, C361–C378, C380–C389, C396–C409, C403–C418, C420–C429, C436–C447, C441–C456, C458–C467, C474–C485, C479–C494, C496–C505, C512–C523, C517–C532, C534–C543, C550–C560, C555–C569, C571–C580, C587–C598, C592–C607, C609–C618, C625–C635, C630–C644, C646–C655, C662–C673, C667–C682, C684–C693, C700–C710, C705–C719, C721–C730, C739–C750, C744–C759, C761–C770, C776–C787, C781–C797, C799–C808, C815–C827, C821–C836, C838–C847, C854–C865, C859–C874, C876–C885, C892–C902, C897–C911, C913–C922, C929–C940, C934–C949, C951–C960, C967–C978, C972–C987, C989–C998, C1005–C1016, C1010–C1023, C1025–C1034, C1041–C1062, C1056–C1071, C1073–C1082, C1089–C1100, C1094–C1109, C1111–C1120, C1127–C1138, C1132–C1147, C1149–C1158, C1165–C1183, C1177–C1192, C1194–C1203, C1210–C1223, C1215–C1233, C1235–C1244, C1251–C1262, C1256–C1276, C1278–C1287, C1294–C1305, C1299–C1314, and C1316–C1325. The 38-residue stretch at 159 to 196 (DIDECRSGTTCRHGGTCLNTPGSFRCQCPLGYTGLLCE) folds into the EGF-like 4; calcium-binding domain. One can recognise an EGF-like 5 domain in the interval 198-235 (PVVPCAPSPCRNGGTCRQSSDVTYDCACLPGFEGQNCE). The EGF-like 6; calcium-binding domain maps to 237–273 (NVDDCPGHRCLNGGTCVDGVNTYNCQCPPEWTGQFCT). The EGF-like 7 domain maps to 275-313 (DVDECQLQPNACHNGGTCFNLLGGHSCVCVNGWTGESCS). Residues 315–351 (NIDDCATAVCFHGATCHDRVASFYCACPMGKTGLLCH) form the EGF-like 8; calcium-binding domain. The region spanning 352-390 (LDDACVSNPCHEDAICDTNPVSGRAICTCPPGFTGGACD) is the EGF-like 9 domain. One can recognise an EGF-like 10; calcium-binding domain in the interval 392 to 430 (DVDECSIGANPCEHLGRCVNTQGSFLCQCGRGYTGPRCE). Residues 432–468 (DVNECLSGPCRNQATCLDRIGQFTCICMAGFTGTYCE) enclose the EGF-like 11; calcium-binding domain. One can recognise an EGF-like 12; calcium-binding domain in the interval 470–506 (DIDECQSSPCVNGGVCKDRVNGFSCTCPSGFSGSMCQ). The EGF-like 13; calcium-binding domain occupies 508-544 (DVDECASTPCRNGAKCVDQPDGYECRCAEGFEGTLCE). An EGF-like 14; calcium-binding domain is found at 546-581 (NVDDCSPDPCHHGRCVDGIASFSCACAPGYTGIRCE). An EGF-like 15; calcium-binding domain is found at 583-619 (QVDECRSQPCRYGGKCLDLVDKYLCRCPPGTTGVNCE). The EGF-like 16; calcium-binding domain maps to 621–656 (NIDDCASNPCTFGVCRDGINRYDCVCQPGFTGPLCN). Residues 658–694 (EINECASSPCGEGGSCVDGENGFHCLCPPGSLPPLCL) enclose the EGF-like 17; calcium-binding domain. EGF-like domains follow at residues 696–731 (ANHP…PRCS), 735–771 (APDA…HQCE), and 772–809 (VLSP…PRCQ). The EGF-like 21; calcium-binding domain occupies 811-848 (DVDECAGASPCGPHGTCTNLPGNFRCICHRGYTGPFCD). The EGF-like 22; calcium-binding domain maps to 850–886 (DIDDCDPNPCLHGGSCQDGVGSFSCSCLDGFAGPRCA). In terms of domain architecture, EGF-like 23; calcium-binding spans 888–923 (DVDECLSSPCGPGTCTDHVASFTCACPPGYGGFHCE). EGF-like domains follow at residues 925–961 (DLPD…THCQ), 963–999 (EADP…SQCQ), 1001–1035 (PVDW…RLCD), 1037–1083 (QSLP…SHCE), and 1085–1121 (EVDP…DSCE). One can recognise an EGF-like 29; calcium-binding domain in the interval 1123-1159 (NIDECASQPCQNGGSCIDLVARYLCSCPPGTLGVLCE). Residues 1161 to 1204 (NEDDCDLGPSLDSGVQCLHNGTCVDLVGGFRCNCPPGYTGLHCE) form the EGF-like 30; calcium-binding domain. N1180 carries N-linked (GlcNAc...) asparagine glycosylation. EGF-like domains are found at residues 1206–1245 (DINE…PRCQ), 1247–1288 (ALSP…LRCE), 1290–1326 (VARS…PSCR), and 1336–1374 (TNAS…PRCE). N-linked (GlcNAc...) asparagine glycosylation occurs at N1337. Disulfide bonds link C1340/C1351, C1345/C1362, C1364/C1373, C1388/C1411, C1393/C1406, C1402/C1418, C1429/C1452, C1434/C1447, C1443/C1459, C1468/C1494, C1476/C1489, and C1485/C1501. LNR repeat units follow at residues 1388 to 1428 (CPRA…PWRQ), 1429 to 1466 (CEAL…GRDR), and 1468 to 1506 (CNPV…SEVP). The N-linked (GlcNAc...) asparagine glycan is linked to N1439. A helical transmembrane segment spans residues 1644–1664 (LLPLLVAGAVFLLIIFILGVM). The Cytoplasmic portion of the chain corresponds to 1665–2318 (VARRKREHST…EVTPKRQVMA (654 aa)). 5 ANK repeats span residues 1839-1868 (TGET…DTNA), 1872-1902 (SGRT…DLDA), 1906-1935 (DGST…DVNA), 1939-1968 (LGKS…NKDM), and 1972-2001 (KEET…NREI). Disordered regions lie at residues 2025-2045 (LDQP…PLLC) and 2058-2126 (QSGT…PLEG). Low complexity predominate over residues 2028–2045 (PSGPRSPSGPHGLGPLLC). R2174 carries the omega-N-methylarginine modification. Residues 2184 to 2193 (SFLLPLAPGP) are compositionally biased toward low complexity. Residues 2184–2318 (SFLLPLAPGP…EVTPKRQVMA (135 aa)) form a disordered region. Positions 2242-2261 (HPYLTPSPESPEHWASPSPP) are PEST-like. Residues 2262 to 2282 (SLSDWSDSTPSPATATNATAS) are compositionally biased toward low complexity. The span at 2296–2305 (SLPQSQTQLG) shows a compositional bias: polar residues.

The protein belongs to the NOTCH family. Interacts with PSMA1. Heterodimer of a C-terminal fragment N(TM) and a N-terminal fragment N(EC) which are probably linked by disulfide bonds. Interacts with MAML1, MAML2 and MAML3 which act as transcriptional coactivators for NOTCH3. Interacts with HIF1AN. Synthesized in the endoplasmic reticulum as an inactive form which is proteolytically cleaved by a furin-like convertase in the trans-Golgi network before it reaches the plasma membrane to yield an active, ligand-accessible form. Cleavage results in a C-terminal fragment N(TM) and a N-terminal fragment N(EC). Following ligand binding, it is cleaved by TNF-alpha converting enzyme (TACE) to yield a membrane-associated intermediate fragment called notch extracellular truncation (NEXT). This fragment is then cleaved by presenilin dependent gamma-secretase to release a notch-derived peptide containing the intracellular domain (NICD) from the membrane. Post-translationally, phosphorylated. In terms of processing, hydroxylated by HIF1AN. In terms of tissue distribution, proliferating neuroepithelium.

Its subcellular location is the cell membrane. It localises to the nucleus. Its function is as follows. Functions as a receptor for membrane-bound ligands Jagged1, Jagged2 and Delta1 to regulate cell-fate determination. Upon ligand activation through the released notch intracellular domain (NICD) it forms a transcriptional activator complex with RBPJ/RBPSUH and activates genes of the enhancer of split locus. Affects the implementation of differentiation, proliferation and apoptotic programs. May play a role during CNS development. The chain is Neurogenic locus notch homolog protein 3 (Notch3) from Mus musculus (Mouse).